We begin with the raw amino-acid sequence, 117 residues long: Large ribosomal subunit protein bL20c (117 aa).

The protein belongs to the bacterial ribosomal protein bL20 family.

The protein localises to the plastid. The protein resides in the chloroplast. Functionally, binds directly to 23S ribosomal RNA and is necessary for the in vitro assembly process of the 50S ribosomal subunit. It is not involved in the protein synthesizing functions of that subunit. The sequence is that of Large ribosomal subunit protein bL20c from Chloranthus spicatus (Chulantree).